The following is a 340-amino-acid chain: 4-dimethylallyltryptophan N-methyltransferase ifgB (340 aa).

It belongs to the methyltransferase superfamily. Homodimer.

The catalysed reaction is 4-(3-methylbut-2-enyl)-L-tryptophan + S-adenosyl-L-methionine = 4-(3-methylbut-2-enyl)-L-abrine + S-adenosyl-L-homocysteine + H(+). Its pathway is alkaloid biosynthesis; ergot alkaloid biosynthesis. 4-dimethylallyltryptophan N-methyltransferase; part of the gene cluster that mediates the biosynthesis of isofumigaclavines, fungal ergot alkaloids. The tryptophan dimethylallyltransferase ifgA catalyzes the first step of ergot alkaloid biosynthesis by condensing dimethylallyl diphosphate (DMAP) and tryptophan to form 4-dimethylallyl-L-tryptophan. The second step is catalyzed by the methyltransferase ifgB that methylates 4-dimethylallyl-L-tryptophan in the presence of S-adenosyl-L-methionine, resulting in the formation of N-methyl-dimethylallyl-L-tryptophan. The catalase ifgD and the FAD-dependent oxidoreductase ifgC then transform N-methyl-dimethylallyl-L-tryptophan to chanoclavine-I which is further oxidized by ifgE in the presence of NAD(+), resulting in the formation of chanoclavine-I aldehyde. The chanoclavine-I aldehyde reductases ifgG and/or fgaOx3 reduce chanoclavine-I aldehyde to dihydrochanoclavine-I aldehyde that spontaneously dehydrates to form 6,8-dimethyl-6,7-didehydroergoline. The festuclavine dehydrogenases ifgF1 and/or ifgF2 then catalyze the reduction of 6,8-dimethyl-6,7-didehydroergoline to form festuclavine. Hydrolysis of festuclavine by a yet undetermined cytochrome P450 monooxygenase (called ifgH) then leads to the formation of isofumigaclavine B which is in turn acetylated by ifgI to isofumigaclavine A. Penicillium roqueforti has interestingly at least two sets of genes for the consumption of chanoclavine-I aldehyde on three different loci, the OYEs ifgG/fgaOx3 and the festuclavine synthase homologs ifgF1/ifgF2. The reason for the duplication of these genes is unclear, probably to ensure the conversion of chanoclavine-I aldehyde by differential gene expression under various environmental conditions. The sequence is that of 4-dimethylallyltryptophan N-methyltransferase ifgB from Penicillium roqueforti (strain FM164).